The sequence spans 70 residues: Large ribosomal subunit protein bL31 (70 aa).

C16, C18, C38, and C41 together coordinate Zn(2+).

This sequence belongs to the bacterial ribosomal protein bL31 family. Type A subfamily. In terms of assembly, part of the 50S ribosomal subunit. Requires Zn(2+) as cofactor.

Functionally, binds the 23S rRNA. The chain is Large ribosomal subunit protein bL31 from Saccharopolyspora erythraea (strain ATCC 11635 / DSM 40517 / JCM 4748 / NBRC 13426 / NCIMB 8594 / NRRL 2338).